Consider the following 76-residue polypeptide: Mu-scoloptoxin(15)-Ssm1a (76 aa).

The first 23 residues, 1–23 (MEKKIIFLVFLVALLALPGFIST), serve as a signal peptide directing secretion. The segment at 33-36 (KKRK) is important for inhibition of KCNQ4. 2 disulfide bridges follow: cysteine 43–cysteine 69 and cysteine 47–cysteine 71.

It belongs to the scoloptoxin-15 family. As to expression, expressed by the venom gland.

The protein localises to the secreted. Its function is as follows. Blocks voltage-gated potassium channels Kv7.4/KCNQ4 (IC(50)=2.5 uM), Kv7.1/KCNQ1 (IC(50)=2.8 uM), Kv7.2/KCNQ2 (IC(50)=2.7 uM) and Kv7.5/KCNQ5 (IC(50)=2.7 uM). Targets the pore domain, in particular negatively charged residues 'Asp-266' and 'Asp-288', of KCNQ4 and probably other KCNQ channel family members where these residues are conserved. In vivo, shows vasoconstrictive activity resulting in acute hypertension when injected intravenously in mice. Also induces coronary vasospasms ultimately leading to heart failure. Induces seizures when injected into the hippocampus of mice. Decreases respiratory rate while increasing respiratory amplitude, probably by triggering a contraction of the bronchial ring. This is Mu-scoloptoxin(15)-Ssm1a from Scolopendra mutilans (Chinese red-headed centipede).